Here is a 581-residue protein sequence, read N- to C-terminus: Terpene synthase 2, chloroplastic (581 aa).

A chloroplast-targeting transit peptide spans 1 to 34 (MYSLPGATMSAAPASIISSSSFVEPLLLAAASPA). Substrate-binding residues include Arg-299, Asp-336, Asp-340, and Arg-480. Mg(2+) is bound by residues Asp-336 and Asp-340. The DDXXD motif motif lies at 336 to 340 (DDIFD). Residues Asp-483, Ser-487, and Glu-491 each contribute to the Mg(2+) site.

This sequence belongs to the terpene synthase family. As to quaternary structure, monomer. It depends on Mg(2+) as a cofactor.

It is found in the plastid. The protein localises to the chloroplast. The catalysed reaction is (2E,6E)-farnesyl diphosphate + H2O = (3S,6E)-nerolidol + diphosphate. It catalyses the reaction (2E,6E,10E)-geranylgeranyl diphosphate + H2O = (6E,10E)-geranyllinalool + diphosphate. The enzyme catalyses (2E)-geranyl diphosphate + H2O = (S)-linalool + diphosphate. The protein operates within secondary metabolite biosynthesis; terpenoid biosynthesis. Functionally, involved in sesquiterpene (C15), diterpene (C20) and monoterpene (C10) biosynthesis. Has sesquiterpene synthase activity, converting farnesyl diphosphate to nerolidol, the precursor of the volatile C11-homoterpene (E)-3,8-dimethyl-1,4,7-nonatriene (DMNT). Has diterpene synthase activity, converting geranylgeranyl diphosphate to (E,E)-geranyllinalool, the precursor of the volatile C16-homoterpene (E,E)-4,8,12-trimethyltrideca 1,3,7,11-tetraene (TMTT). Has monoterpene synthase activity, converting geranyl diphosphate into linalool. Forms only the S-isomers of the three tertiary terpene alcohols. In Zea mays (Maize), this protein is Terpene synthase 2, chloroplastic.